The sequence spans 683 residues: Probable serine/threonine-protein kinase HAL5-like (683 aa).

Disordered stretches follow at residues 1–90 (MPQQ…VSDE) and 157–200 (YPQN…SKKA). Positions 36 to 48 (PSSAATSDSSEMS) are enriched in low complexity. The segment covering 50–60 (AQGGRGNGLLG) has biased composition (gly residues). The segment covering 69–85 (SPKSEAQFTQRNKSAES) has biased composition (polar residues). A Protein kinase domain is found at 364–670 (GKCIGMIGQG…IPKLLDTPWM (307 aa)). Residues 370-378 (IGQGAYGTV) and lysine 411 contribute to the ATP site. Catalysis depends on aspartate 521, which acts as the Proton acceptor.

Belongs to the protein kinase superfamily. CAMK Ser/Thr protein kinase family. NPR/HAL subfamily. HAL5 sub-subfamily.

The catalysed reaction is L-seryl-[protein] + ATP = O-phospho-L-seryl-[protein] + ADP + H(+). It catalyses the reaction L-threonyl-[protein] + ATP = O-phospho-L-threonyl-[protein] + ADP + H(+). This Eremothecium gossypii (strain ATCC 10895 / CBS 109.51 / FGSC 9923 / NRRL Y-1056) (Yeast) protein is Probable serine/threonine-protein kinase HAL5-like.